A 321-amino-acid polypeptide reads, in one-letter code: Lipoyl synthase (321 aa).

7 residues coordinate [4Fe-4S] cluster: Cys-68, Cys-73, Cys-79, Cys-94, Cys-98, Cys-101, and Ser-308. Residues 80–297 (FNHGTATFMI…KAEAIAMGFT (218 aa)) enclose the Radical SAM core domain.

It belongs to the radical SAM superfamily. Lipoyl synthase family. [4Fe-4S] cluster is required as a cofactor.

The protein resides in the cytoplasm. The catalysed reaction is [[Fe-S] cluster scaffold protein carrying a second [4Fe-4S](2+) cluster] + N(6)-octanoyl-L-lysyl-[protein] + 2 oxidized [2Fe-2S]-[ferredoxin] + 2 S-adenosyl-L-methionine + 4 H(+) = [[Fe-S] cluster scaffold protein] + N(6)-[(R)-dihydrolipoyl]-L-lysyl-[protein] + 4 Fe(3+) + 2 hydrogen sulfide + 2 5'-deoxyadenosine + 2 L-methionine + 2 reduced [2Fe-2S]-[ferredoxin]. It participates in protein modification; protein lipoylation via endogenous pathway; protein N(6)-(lipoyl)lysine from octanoyl-[acyl-carrier-protein]: step 2/2. Its function is as follows. Catalyzes the radical-mediated insertion of two sulfur atoms into the C-6 and C-8 positions of the octanoyl moiety bound to the lipoyl domains of lipoate-dependent enzymes, thereby converting the octanoylated domains into lipoylated derivatives. The sequence is that of Lipoyl synthase from Pectobacterium carotovorum subsp. carotovorum (strain PC1).